The primary structure comprises 882 residues: Alanine--tRNA ligase (882 aa).

Zn(2+) is bound by residues His-571, His-575, Cys-673, and His-677.

Belongs to the class-II aminoacyl-tRNA synthetase family. Zn(2+) is required as a cofactor.

It localises to the cytoplasm. The enzyme catalyses tRNA(Ala) + L-alanine + ATP = L-alanyl-tRNA(Ala) + AMP + diphosphate. In terms of biological role, catalyzes the attachment of alanine to tRNA(Ala) in a two-step reaction: alanine is first activated by ATP to form Ala-AMP and then transferred to the acceptor end of tRNA(Ala). Also edits incorrectly charged Ser-tRNA(Ala) and Gly-tRNA(Ala) via its editing domain. In Stenotrophomonas maltophilia (strain K279a), this protein is Alanine--tRNA ligase.